Reading from the N-terminus, the 93-residue chain is Small ribosomal subunit protein uS19c (93 aa).

Residues 73–93 (EFSPTRTFRGHTKSDKKSRRP) are disordered. Residues 80–93 (FRGHTKSDKKSRRP) are compositionally biased toward basic residues.

This sequence belongs to the universal ribosomal protein uS19 family.

The protein resides in the plastid. It is found in the chloroplast. Functionally, protein S19 forms a complex with S13 that binds strongly to the 16S ribosomal RNA. The protein is Small ribosomal subunit protein uS19c (rps19) of Mesostigma viride (Green alga).